The chain runs to 375 residues: Succinyl-diaminopimelate desuccinylase (375 aa).

H66 provides a ligand contact to Zn(2+). D68 is an active-site residue. Zn(2+) is bound at residue D99. E133 (proton acceptor) is an active-site residue. Zn(2+)-binding residues include E134, E162, and H348.

This sequence belongs to the peptidase M20A family. DapE subfamily. In terms of assembly, homodimer. Zn(2+) serves as cofactor. Co(2+) is required as a cofactor.

The enzyme catalyses N-succinyl-(2S,6S)-2,6-diaminopimelate + H2O = (2S,6S)-2,6-diaminopimelate + succinate. Its pathway is amino-acid biosynthesis; L-lysine biosynthesis via DAP pathway; LL-2,6-diaminopimelate from (S)-tetrahydrodipicolinate (succinylase route): step 3/3. Its function is as follows. Catalyzes the hydrolysis of N-succinyl-L,L-diaminopimelic acid (SDAP), forming succinate and LL-2,6-diaminopimelate (DAP), an intermediate involved in the bacterial biosynthesis of lysine and meso-diaminopimelic acid, an essential component of bacterial cell walls. The polypeptide is Succinyl-diaminopimelate desuccinylase (Cronobacter sakazakii (strain ATCC BAA-894) (Enterobacter sakazakii)).